We begin with the raw amino-acid sequence, 152 residues long: UPF0225 protein YchJ (152 aa).

Belongs to the UPF0225 family.

The chain is UPF0225 protein YchJ from Escherichia coli O127:H6 (strain E2348/69 / EPEC).